A 98-amino-acid chain; its full sequence is C-C motif chemokine 19 (98 aa).

The N-terminal stretch at 1–21 is a signal peptide; the sequence is MALLLALSLLVLWTSPAPTLS. 2 disulfides stabilise this stretch: cysteine 29–cysteine 55 and cysteine 30–cysteine 71.

The protein belongs to the intercrine beta (chemokine CC) family. Interacts with TNFAIP6 (via Link domain). Expressed at high levels in the lymph nodes, thymus and appendix. Intermediate levels seen in colon and trachea, while low levels found in spleen, small intestine, lung, kidney and stomach.

It localises to the secreted. Its function is as follows. May play a role not only in inflammatory and immunological responses but also in normal lymphocyte recirculation and homing. May play an important role in trafficking of T-cells in thymus, and T-cell and B-cell migration to secondary lymphoid organs. Binds to chemokine receptor CCR7. Recombinant CCL19 shows potent chemotactic activity for T-cells and B-cells but not for granulocytes and monocytes. Binds to atypical chemokine receptor ACKR4 and mediates the recruitment of beta-arrestin (ARRB1/2) to ACKR4. The sequence is that of C-C motif chemokine 19 (CCL19) from Homo sapiens (Human).